Reading from the N-terminus, the 443-residue chain is Serine/threonine-protein phosphatase 2A 55 kDa regulatory subunit B beta isoform (443 aa).

WD repeat units follow at residues 22–61, 87–128, 171–209, 220–260, 279–317, 334–375, and 410–443; these read TEAD…KNQP, EIEE…KRPE, AHTY…RSFN, ELTE…LCDR, EIIS…RPIE, ENDC…DVTL, and DFSK…DKVN.

It belongs to the phosphatase 2A regulatory subunit B family. PP2A consists of a common heterodimeric core enzyme, composed of a 36 kDa catalytic subunit (subunit C) and a 65 kDa constant regulatory subunit (PR65 or subunit A), that associates with a variety of regulatory subunits.

It localises to the cytoplasm. The protein resides in the cytoskeleton. It is found in the membrane. Its function is as follows. The B regulatory subunit might modulate substrate selectivity and catalytic activity, and might also direct the localization of the catalytic enzyme to a particular subcellular compartment. Negatively controls the initiation of oocyte maturation. The sequence is that of Serine/threonine-protein phosphatase 2A 55 kDa regulatory subunit B beta isoform (ppp2r2b) from Xenopus tropicalis (Western clawed frog).